A 546-amino-acid polypeptide reads, in one-letter code: Chaperonin GroEL 6 (546 aa).

ATP-binding positions include 30–33 (TLGP), Lys51, 87–91 (DGTTT), Gly415, and Asp496.

It belongs to the chaperonin (HSP60) family. In terms of assembly, forms a cylinder of 14 subunits composed of two heptameric rings stacked back-to-back. Interacts with the co-chaperonin GroES.

It localises to the cytoplasm. It carries out the reaction ATP + H2O + a folded polypeptide = ADP + phosphate + an unfolded polypeptide.. Its function is as follows. Together with its co-chaperonin GroES, plays an essential role in assisting protein folding. The GroEL-GroES system forms a nano-cage that allows encapsulation of the non-native substrate proteins and provides a physical environment optimized to promote and accelerate protein folding. The protein is Chaperonin GroEL 6 of Bradyrhizobium diazoefficiens (strain JCM 10833 / BCRC 13528 / IAM 13628 / NBRC 14792 / USDA 110).